Here is a 147-residue protein sequence, read N- to C-terminus: Orcokinin peptides (147 aa).

The first 27 residues, 1-27 (MPRHSVFALSILALSITATVWIPTVQA), serve as a signal peptide directing secretion. 2 propeptides span residues 28–89 (ETNL…ERFG) and 146–147 (FG).

Belongs to the orcokinin family.

Its subcellular location is the secreted. Its function is as follows. Myotropic peptides. In Apis mellifera (Honeybee), this protein is Orcokinin peptides.